The primary structure comprises 197 residues: MAESPKINRREHILQCLAQMLETSPGQRITTAKLAAEVGVSEAALYRHFPSKARMFEGLIEFIEDAILSRLNIIMDEEKDTMTRCQLVLHLLLVFSERNPGISRVLNGDALLGENERLRSRIDVLFAKIETHIKQILREKTLREGVGFNIDEAILANLLLAFAEGRISQFVRSEFKQKPTQHFDEQWTFIQQQLLRS.

One can recognise an HTH tetR-type domain in the interval 7–67 (INRREHILQC…GLIEFIEDAI (61 aa)). A DNA-binding region (H-T-H motif) is located at residues 30–49 (TTAKLAAEVGVSEAALYRHF). Residues 110-130 (ALLGENERLRSRIDVLFAKIE) are a coiled coil.

This sequence belongs to the nucleoid occlusion factor SlmA family. Homodimer. Interacts with FtsZ.

Its subcellular location is the cytoplasm. The protein resides in the nucleoid. Required for nucleoid occlusion (NO) phenomenon, which prevents Z-ring formation and cell division over the nucleoid. Acts as a DNA-associated cell division inhibitor that binds simultaneously chromosomal DNA and FtsZ, and disrupts the assembly of FtsZ polymers. SlmA-DNA-binding sequences (SBS) are dispersed on non-Ter regions of the chromosome, preventing FtsZ polymerization at these regions. This Shewanella frigidimarina (strain NCIMB 400) protein is Nucleoid occlusion factor SlmA.